The chain runs to 416 residues: Type II methyltransferase M.PspPI (416 aa).

An SAM-dependent MTase C5-type domain is found at 77-410; that stretch reads YSLVELFAGA…KAIIRMLNAA (334 aa). Cys149 is an active-site residue.

Belongs to the class I-like SAM-binding methyltransferase superfamily. C5-methyltransferase family.

The enzyme catalyses a 2'-deoxycytidine in DNA + S-adenosyl-L-methionine = a 5-methyl-2'-deoxycytidine in DNA + S-adenosyl-L-homocysteine + H(+). Its function is as follows. A methylase, recognizes the double-stranded sequence 5'-GGNCC-3', methylates C-4 on both strands, and protects the DNA from cleavage by the PspPI endonuclease. The sequence is that of Type II methyltransferase M.PspPI from Psychrobacter sp. (strain TA137).